A 577-amino-acid chain; its full sequence is Pentatricopeptide repeat-containing protein At1g06143 (577 aa).

PPR repeat units lie at residues 59-89, 90-124, 125-155, 158-192, 193-219, 220-250, 251-285, 286-320, 321-351, 352-386, 387-417, and 423-453; these read DCRLMNQFITACTSFKRLDLAVSTMTQMQEP, NVFVYNALFKGFVTCSHPIRSLELYVRMLRDSVSP, SSYTYSSLVKASSFASRFGESLQAHIWKFGF, HVKIQTTLIDFYSATGRIREARKVFDEMPERDDIA, WTTMVSAYRRVLDMDSANSLANQMSEK, NEATSNCLINGYMGLGNLEQAESLFNQMPVK, DIISWTTMIKGYSQNKRYREAIAVFYKMMEEGIIP, DEVTMSTVISACAHLGVLEIGKEVHMYTLQNGFVL, DVYIGSALVDMYSKCGSLERALLVFFNLPKK, NLFCWNSIIEGLAAHGFAQEALKMFAKMEMESVKP, NAVTFVSVFTACTHAGLVDEGRRIYRSMIDD, and NVEHYGGMVHLFSKAGLIYEALELIGNMEFE. The type E motif stretch occupies residues 458-534; that stretch reads IWGALLDGCR…CPGTSSIRID (77 aa). Positions 535–565 are type E(+) motif; the sequence is KRDHLFAAADKSHSASDEVCLLLDEIYDQMG.

The protein belongs to the PPR family. PCMP-E subfamily.

The sequence is that of Pentatricopeptide repeat-containing protein At1g06143 (EMB1444) from Arabidopsis thaliana (Mouse-ear cress).